Reading from the N-terminus, the 190-residue chain is FMRFamide-related peptides (190 aa).

Positions 1–21 (MSCSRTVALLAALWLVVGATS) are cleaved as a signal peptide. The propeptide occupies 22–33 (SPVRRSPDLEAR). F45 carries the post-translational modification Phenylalanine amide. Positions 69–104 (GNSFLRFGRSQPLTLSTDDLVSLLRAYEEDYDTPMT) are excised as a propeptide. Phenylalanine amide is present on F113. Positions 116 to 150 (DPNFIRLGRSADDDKSAFEQNSELVVSGYPQRKSR) are excised as a propeptide. A Leucine amide modification is found at L158. Positions 160–190 (RDSEEVNENEFEETEESRRKRSADSCHDCQS) are excised as a propeptide. The tract at residues 161-190 (DSEEVNENEFEETEESRRKRSADSCHDCQS) is disordered. Positions 164 to 174 (EVNENEFEETE) are enriched in acidic residues. Residues 175–190 (ESRRKRSADSCHDCQS) are compositionally biased toward basic and acidic residues.

It belongs to the FARP (FMRFamide related peptide) family. As to expression, RFamide 1: Expressed in corpora cardiaca (CC), corpora allata (CA), antennal lobe (AL) and gnathal ganglion (GNG) (at protein level). Expression in AL detected in most animals, in CC, CA and in GNG in some animals (at protein level). RFamide precursor-related peptide 2: Expressed in corpora cardiaca (CC), corpora allata (CA), antennal lobe (AL) and gnathal ganglion (GNG) (at protein level). Expression in AL detected in some animals, expression in CC, CA and GNG in few animals (at protein level). RFamide 3: Expressed in corpora cardiaca (CC), corpora allata (CA), antennal lobe (AL) and gnathal ganglion (GNG) (at protein level). Expression in AL detected in all animals, in CC, CA and GNG in most animals (at protein level). RFamide 5: Expressed in corpora cardiaca (CC), corpora allata (CA), antennal lobe (AL) and gnathal ganglion (GNG) (at protein level). Expression in AL detected in all animals, in CC, CA and in GNG in some animals (at protein level).

The protein localises to the secreted. In insects, FMRFamide and related peptides have modulatory actions at skeletal neuromuscular junctions, and peptides that are immunologically related to FMRFamide are released into the circulation from neurohemal organs. This Agrotis ipsilon (Black cutworm moth) protein is FMRFamide-related peptides.